Here is a 285-residue protein sequence, read N- to C-terminus: 2-dehydro-3-deoxyphosphooctonate aldolase (285 aa).

It belongs to the KdsA family.

Its subcellular location is the cytoplasm. It catalyses the reaction D-arabinose 5-phosphate + phosphoenolpyruvate + H2O = 3-deoxy-alpha-D-manno-2-octulosonate-8-phosphate + phosphate. It participates in carbohydrate biosynthesis; 3-deoxy-D-manno-octulosonate biosynthesis; 3-deoxy-D-manno-octulosonate from D-ribulose 5-phosphate: step 2/3. Its pathway is bacterial outer membrane biogenesis; lipopolysaccharide biosynthesis. The chain is 2-dehydro-3-deoxyphosphooctonate aldolase from Variovorax paradoxus (strain S110).